The sequence spans 594 residues: Alanine--tRNA ligase (594 aa).

The Zn(2+) site is built by His456, His460, Cys558, and His562.

The protein belongs to the class-II aminoacyl-tRNA synthetase family. Zn(2+) is required as a cofactor.

It is found in the cytoplasm. The catalysed reaction is tRNA(Ala) + L-alanine + ATP = L-alanyl-tRNA(Ala) + AMP + diphosphate. In terms of biological role, catalyzes the attachment of alanine to tRNA(Ala) in a two-step reaction: alanine is first activated by ATP to form Ala-AMP and then transferred to the acceptor end of tRNA(Ala). Also edits incorrectly charged Ser-tRNA(Ala) and Gly-tRNA(Ala) via its editing domain. The chain is Alanine--tRNA ligase (alaS) from Borreliella afzelii (strain PKo) (Borrelia afzelii).